We begin with the raw amino-acid sequence, 63 residues long: Prokaryotic ubiquitin-like protein Pup (63 aa).

The tract at residues 1-28 is disordered; sequence MPQEFEQIRSADQPLDSEESAPVAGART. The tract at residues 19–57 is ARC ATPase binding; the sequence is ESAPVAGARTDDTVDALDAVLDDIESVLETNAEEYVGSF. Residue Glu-63 forms an Isoglutamyl lysine isopeptide (Glu-Lys) (interchain with K-? in acceptor proteins) linkage.

The protein belongs to the prokaryotic ubiquitin-like protein family. In terms of assembly, strongly interacts with the proteasome-associated ATPase ARC through a hydrophobic interface; the interacting region of Pup lies in its C-terminal half. There is one Pup binding site per ARC hexamer ring.

Its pathway is protein degradation; proteasomal Pup-dependent pathway. Functionally, protein modifier that is covalently attached to lysine residues of substrate proteins, thereby targeting them for proteasomal degradation. The tagging system is termed pupylation. In Bifidobacterium dentium (strain ATCC 27534 / DSM 20436 / JCM 1195 / Bd1), this protein is Prokaryotic ubiquitin-like protein Pup.